A 53-amino-acid chain; its full sequence is Photosystem II reaction center protein K (53 aa).

Residues 1 to 16 (MFYTNVETLLNTNCFA) constitute a propeptide that is removed on maturation. A helical membrane pass occupies residues 28 to 48 (LVDVLPIIPLLFLLLAFVWQA).

It belongs to the PsbK family. PSII is composed of 1 copy each of membrane proteins PsbA, PsbB, PsbC, PsbD, PsbE, PsbF, PsbH, PsbI, PsbJ, PsbK, PsbL, PsbM, PsbT, PsbY, PsbZ, Psb30/Ycf12, at least 3 peripheral proteins of the oxygen-evolving complex and a large number of cofactors. It forms dimeric complexes.

Its subcellular location is the plastid. The protein localises to the chloroplast thylakoid membrane. Functionally, one of the components of the core complex of photosystem II (PSII). PSII is a light-driven water:plastoquinone oxidoreductase that uses light energy to abstract electrons from H(2)O, generating O(2) and a proton gradient subsequently used for ATP formation. It consists of a core antenna complex that captures photons, and an electron transfer chain that converts photonic excitation into a charge separation. The protein is Photosystem II reaction center protein K of Euglena anabaena (Euglenaria anabaena).